The primary structure comprises 230 residues: Sodium channel modifier 1 (230 aa).

The residue at position 2 (S2) is a Phosphoserine. The short motif at 4 to 20 (KREGDDWSQLNVLKKRR) is the Bipartite nuclear localization signal element. The Matrin-type zinc-finger motif lies at 42–74 (FACAICPHRPVLDTLAMLTAHRAGKKHLSSLQL). A Glycyl lysine isopeptide (Lys-Gly) (interchain with G-Cter in SUMO2) cross-link involves residue K67. Disordered stretches follow at residues 76 to 106 (YGKKQPGKERKQNPKHQNELRREETKAEAPL), 129 to 186 (RRKY…SPTR), and 200 to 230 (GWIPDGRGRWVKDENVEFDSDEEEPPDLPLD). A compositionally biased stretch (basic and acidic residues) spans 81 to 102 (PGKERKQNPKHQNELRREETKA). S144 is subject to Phosphoserine. The span at 164–174 (PAAGPQAEESA) shows a compositional bias: low complexity. A Phosphoserine modification is found at S183. The interval 188 to 230 (RALDHYLTLRSSGWIPDGRGRWVKDENVEFDSDEEEPPDLPLD) is required for interaction with LUC7L2. Residues 205–214 (GRGRWVKDEN) show a composition bias toward basic and acidic residues. The segment covering 215–230 (VEFDSDEEEPPDLPLD) has biased composition (acidic residues). Phosphoserine is present on S219.

As to quaternary structure, component of the minor spliceosome, which splices U12-type introns. Within this complex, interacts with RNF113A, as well as with SF3B1/SF3b155, SF3B2/SF3b145, SF3B3/SF3b130 and CDC5L. May interact with LUC7L2 and SNRNP70.

The protein resides in the nucleus. It localises to the nucleoplasm. Its subcellular location is the nucleus speckle. Its function is as follows. As a component of the minor spliceosome, involved in the splicing of U12-type introns in pre-mRNAs. Plays a role in the regulation of primary cilia length and Hedgehog signaling. The chain is Sodium channel modifier 1 (SCNM1) from Homo sapiens (Human).